We begin with the raw amino-acid sequence, 246 residues long: UDP-N-acetyl-D-mannosaminuronic acid transferase (246 aa).

This sequence belongs to the glycosyltransferase 26 family.

The enzyme catalyses UDP-N-acetyl-alpha-D-mannosaminouronate + N-acetyl-alpha-D-glucosaminyl-di-trans,octa-cis-undecaprenyl diphosphate = beta-D-ManNAcA-(1-&gt;4)-alpha-D-GlcNAc-di-trans,octa-cis-undecaprenyl diphosphate + UDP + H(+). Its pathway is bacterial outer membrane biogenesis; enterobacterial common antigen biosynthesis. Its function is as follows. Catalyzes the synthesis of Und-PP-GlcNAc-ManNAcA (Lipid II), the second lipid-linked intermediate involved in enterobacterial common antigen (ECA) synthesis. This Yersinia pseudotuberculosis serotype IB (strain PB1/+) protein is UDP-N-acetyl-D-mannosaminuronic acid transferase.